The following is a 350-amino-acid chain: Transmembrane protein 115 (350 aa).

At 1–19 (MQRALPGARQHLGAILASA) the chain is on the cytoplasmic side. The mediates homooligomerization stretch occupies residues 1-205 (MQRALPGARQ…FGLLSSWVYL (205 aa)). Residues 20–40 (SVVVKALCAVVLFLYLLSFAV) traverse the membrane as a helical segment. Topologically, residues 41 to 97 (DTGCLAVTPGYLFPPNFWIWTLATHGLMEQHVWDVAISLATVVVAGRLLEPLWGALE) are lumenal. The helical transmembrane segment at 98–118 (LLIFFSVVNVSVGLLGALAYL) threads the bilayer. The Cytoplasmic portion of the chain corresponds to 119–126 (LTYMASFN). A helical transmembrane segment spans residues 127 to 147 (LVYLFTIRIHGALGFLGGVLV). At 148–165 (ALKQTMGDCVVLRVPQVR) the chain is on the lumenal side. A helical membrane pass occupies residues 166–186 (VSVVPMLLLALLLLLRLATLL). At 187 to 350 (QSPALASYGF…LITLETAPLL (164 aa)) the chain is on the cytoplasmic side. A mediates localization to the Golgi region spans residues 206–229 (RFYQRHSRGRGDMADHFAFATFFP). The tract at residues 299 to 350 (EDQSAWPSMDDDEEEAGAKTDSPLPLEEASTPPGKVTVPESSLITLETAPLL) is disordered. Threonine 329 is subject to Phosphothreonine.

Belongs to the TMEM115 family. In terms of assembly, homooligomer. Interacts with COPB1. May interact with LMAN1. Interacts with the COG complex; probably through COG3.

Its subcellular location is the golgi apparatus. It is found in the golgi stack membrane. Its function is as follows. May play a role in retrograde transport of proteins from the Golgi to the endoplasmic reticulum. May indirectly play a role in protein glycosylation in the Golgi. The polypeptide is Transmembrane protein 115 (Mus musculus (Mouse)).